The sequence spans 541 residues: Nectin 1b (541 aa).

Positions 1-21 (MDKQESFFVGHKSHRCSQNRS) are cleaved as a signal peptide. Over 22–396 (VSQIHQRTSR…PAELHSSGAA (375 aa)) the chain is Extracellular. 7 N-linked (GlcNAc...) asparagine glycosylation sites follow: Asn51, Asn105, Asn180, Asn242, Asn326, Asn337, and Asn372. The 106-residue stretch at 77-182 (GDTVELKCLF…GNRENMVNLT (106 aa)) folds into the Ig-like V-type domain. The cysteines at positions 84 and 165 are disulfide-linked. 2 consecutive Ig-like C2-type domains span residues 187-282 (PVTK…VILN) and 287-374 (PEVK…VNVT). 2 cysteine pairs are disulfide-bonded: Cys212–Cys266 and Cys309–Cys356. A helical membrane pass occupies residues 397–417 (IGGAVGGVALLVAAIALLVFF). At 418–541 (LRRRQRTFKG…SVISKKEWYV (124 aa)) the chain is on the cytoplasmic side. Residues 440–507 (YSKAGGMPAH…VDEGESRDYD (68 aa)) are disordered. Residues 479 to 493 (SGDRDFDGNSEDLKR) show a composition bias toward basic and acidic residues.

It belongs to the nectin family. Cis- and trans-homodimer. Can form trans-heterodimers. As to expression, expressed in the developing eye and nervous system.

The protein resides in the cell membrane. The protein localises to the cell junction. It is found in the adherens junction. Functionally, cell adhesion molecule that promotes cell-cell contacts and plays important roles in the development of the nervous system. Acts by forming homophilic or heterophilic trans-dimers. In Danio rerio (Zebrafish), this protein is Nectin 1b.